The sequence spans 65 residues: Small ribosomal subunit protein bS21 (65 aa).

The segment at 43-65 is disordered; sequence VDDRLKRARSKRRAQRANEESNA. A compositionally biased stretch (basic residues) spans 48–57; sequence KRARSKRRAQ.

This sequence belongs to the bacterial ribosomal protein bS21 family.

This chain is Small ribosomal subunit protein bS21, found in Chloroherpeton thalassium (strain ATCC 35110 / GB-78).